The chain runs to 351 residues: 1-aminocyclopropane-1-carboxylate oxidase homolog 4 (351 aa).

A Fe2OG dioxygenase domain is found at 200 to 304 (KSQYMVGQHY…AIVFSTFMRA (105 aa)). Fe cation contacts are provided by histidine 224, aspartate 226, and histidine 280. Position 291 (arginine 291) interacts with 2-oxoglutarate.

It belongs to the iron/ascorbate-dependent oxidoreductase family. It depends on Fe(2+) as a cofactor.

In Arabidopsis thaliana (Mouse-ear cress), this protein is 1-aminocyclopropane-1-carboxylate oxidase homolog 4.